The sequence spans 30 residues: uncharacterized protein (30 aa).

This is an uncharacterized protein from Treponema pallidum (strain Nichols).